The sequence spans 449 residues: Phosphoglucosamine mutase (449 aa).

Serine 102 acts as the Phosphoserine intermediate in catalysis. Mg(2+) is bound by residues serine 102, aspartate 243, aspartate 245, and aspartate 247. Serine 102 carries the post-translational modification Phosphoserine.

This sequence belongs to the phosphohexose mutase family. Mg(2+) serves as cofactor. Activated by phosphorylation.

It catalyses the reaction alpha-D-glucosamine 1-phosphate = D-glucosamine 6-phosphate. Its function is as follows. Catalyzes the conversion of glucosamine-6-phosphate to glucosamine-1-phosphate. This is Phosphoglucosamine mutase from Maricaulis maris (strain MCS10) (Caulobacter maris).